We begin with the raw amino-acid sequence, 141 residues long: Actin-depolymerizing factor 9 (141 aa).

Ser-8 bears the Phosphoserine mark. Residues 8–141 form the ADF-H domain; it reads SGMWMTDDCK…GFDKIQDRAK (134 aa).

The protein belongs to the actin-binding proteins ADF family.

The protein localises to the cytoplasm. Its subcellular location is the cytoskeleton. In terms of biological role, does not display typical F-actin depolymerizing activity. Exhibits a high ability to stabilize and cross-link actin filaments. Functions as an actin bundling protein with the highest efficiency under acidic conditions. May play a role in the modulation of levels of histone H3 lysine 4 trimethylation and H3 lysine 9 and 14 acetylation at the FLC locus. The protein is Actin-depolymerizing factor 9 (ADF9) of Arabidopsis thaliana (Mouse-ear cress).